Consider the following 235-residue polypeptide: Phosphoribosylaminoimidazole-succinocarboxamide synthase (235 aa).

Belongs to the SAICAR synthetase family.

The catalysed reaction is 5-amino-1-(5-phospho-D-ribosyl)imidazole-4-carboxylate + L-aspartate + ATP = (2S)-2-[5-amino-1-(5-phospho-beta-D-ribosyl)imidazole-4-carboxamido]succinate + ADP + phosphate + 2 H(+). Its pathway is purine metabolism; IMP biosynthesis via de novo pathway; 5-amino-1-(5-phospho-D-ribosyl)imidazole-4-carboxamide from 5-amino-1-(5-phospho-D-ribosyl)imidazole-4-carboxylate: step 1/2. This chain is Phosphoribosylaminoimidazole-succinocarboxamide synthase, found in Prosthecochloris aestuarii (strain DSM 271 / SK 413).